The following is a 489-amino-acid chain: UDP-N-acetylmuramate--L-alanine ligase (489 aa).

128 to 134 (GTHGKTT) contributes to the ATP binding site.

This sequence belongs to the MurCDEF family.

The protein localises to the cytoplasm. It catalyses the reaction UDP-N-acetyl-alpha-D-muramate + L-alanine + ATP = UDP-N-acetyl-alpha-D-muramoyl-L-alanine + ADP + phosphate + H(+). The protein operates within cell wall biogenesis; peptidoglycan biosynthesis. Cell wall formation. In Shewanella woodyi (strain ATCC 51908 / MS32), this protein is UDP-N-acetylmuramate--L-alanine ligase.